We begin with the raw amino-acid sequence, 78 residues long: Translational regulator CsrA (78 aa).

The protein belongs to the CsrA/RsmA family. In terms of assembly, homodimer; the beta-strands of each monomer intercalate to form a hydrophobic core, while the alpha-helices form wings that extend away from the core.

The protein resides in the cytoplasm. In terms of biological role, a translational regulator that binds mRNA to regulate translation initiation and/or mRNA stability. Usually binds in the 5'-UTR at or near the Shine-Dalgarno sequence preventing ribosome-binding, thus repressing translation. Its main target seems to be the major flagellin gene, while its function is anatagonized by FliW. This chain is Translational regulator CsrA, found in Natranaerobius thermophilus (strain ATCC BAA-1301 / DSM 18059 / JW/NM-WN-LF).